We begin with the raw amino-acid sequence, 189 residues long: UPF0312 protein VPA0850 (189 aa).

The first 22 residues, 1-22, serve as a signal peptide directing secretion; the sequence is MKKSLFATGLAIAMALPLGAQA.

It belongs to the UPF0312 family. Type 1 subfamily.

The protein localises to the periplasm. This Vibrio parahaemolyticus serotype O3:K6 (strain RIMD 2210633) protein is UPF0312 protein VPA0850.